The primary structure comprises 130 residues: Small ribosomal subunit protein uS8 (130 aa).

This sequence belongs to the universal ribosomal protein uS8 family. In terms of assembly, part of the 30S ribosomal subunit.

One of the primary rRNA binding proteins, it binds directly to 16S rRNA central domain where it helps coordinate assembly of the platform of the 30S subunit. The polypeptide is Small ribosomal subunit protein uS8 (Methanoregula boonei (strain DSM 21154 / JCM 14090 / 6A8)).